The sequence spans 660 residues: Bifunctional polymyxin resistance protein ArnA (660 aa).

The formyltransferase ArnAFT stretch occupies residues 1-304 (MKTVVFAYHD…TLGLVQGSRL (304 aa)). Residue 86 to 88 (HLI) coordinates (6R)-10-formyltetrahydrofolate. Residue H104 is the Proton donor; for formyltransferase activity of the active site. Residues R114 and 136-140 (VKRAD) contribute to the (6R)-10-formyltetrahydrofolate site. The dehydrogenase ArnADH stretch occupies residues 314-660 (RRTRVLILGV…RTVDLTDKPS (347 aa)). NAD(+)-binding positions include D347 and 368 to 369 (DI). UDP-alpha-D-glucuronate is bound by residues A393, Y398, and 432 to 433 (TS). E434 (proton acceptor; for decarboxylase activity) is an active-site residue. UDP-alpha-D-glucuronate contacts are provided by residues R460, N492, 526–535 (KLIDGGKQKR), and Y613. Residue R619 is the Proton donor; for decarboxylase activity of the active site.

In the N-terminal section; belongs to the Fmt family. UDP-L-Ara4N formyltransferase subfamily. It in the C-terminal section; belongs to the NAD(P)-dependent epimerase/dehydratase family. UDP-glucuronic acid decarboxylase subfamily. As to quaternary structure, homohexamer, formed by a dimer of trimers.

The enzyme catalyses UDP-alpha-D-glucuronate + NAD(+) = UDP-beta-L-threo-pentopyranos-4-ulose + CO2 + NADH. The catalysed reaction is UDP-4-amino-4-deoxy-beta-L-arabinose + (6R)-10-formyltetrahydrofolate = UDP-4-deoxy-4-formamido-beta-L-arabinose + (6S)-5,6,7,8-tetrahydrofolate + H(+). It functions in the pathway nucleotide-sugar biosynthesis; UDP-4-deoxy-4-formamido-beta-L-arabinose biosynthesis; UDP-4-deoxy-4-formamido-beta-L-arabinose from UDP-alpha-D-glucuronate: step 1/3. The protein operates within nucleotide-sugar biosynthesis; UDP-4-deoxy-4-formamido-beta-L-arabinose biosynthesis; UDP-4-deoxy-4-formamido-beta-L-arabinose from UDP-alpha-D-glucuronate: step 3/3. Its pathway is bacterial outer membrane biogenesis; lipopolysaccharide biosynthesis. Bifunctional enzyme that catalyzes the oxidative decarboxylation of UDP-glucuronic acid (UDP-GlcUA) to UDP-4-keto-arabinose (UDP-Ara4O) and the addition of a formyl group to UDP-4-amino-4-deoxy-L-arabinose (UDP-L-Ara4N) to form UDP-L-4-formamido-arabinose (UDP-L-Ara4FN). The modified arabinose is attached to lipid A and is required for resistance to polymyxin and cationic antimicrobial peptides. This is Bifunctional polymyxin resistance protein ArnA from Escherichia coli O127:H6 (strain E2348/69 / EPEC).